The sequence spans 290 residues: Undecaprenyl-diphosphatase (290 aa).

Helical transmembrane passes span 1–21, 48–68, 101–121, 125–145, 161–181, 202–222, 231–251, and 266–286; these read MFLLELIKGIILGIVEGLTEF, SAFTFKVVIQLGSVFAAAWVF, IHVLVGMVPAGILGFLFDDLI, LFSVPTVLIGLFIGAIYMIIA, INYFQAFVIGISQAIAMWPGF, SDFTFIMSVPIMLAASGLSLL, AHIPFYILGFLAAFIVGLIAI, and FAIYRIVLVIFIAILYFGFGI.

It belongs to the UppP family.

The protein localises to the cell membrane. It catalyses the reaction di-trans,octa-cis-undecaprenyl diphosphate + H2O = di-trans,octa-cis-undecaprenyl phosphate + phosphate + H(+). Its function is as follows. Catalyzes the dephosphorylation of undecaprenyl diphosphate (UPP). Confers resistance to bacitracin. This Staphylococcus epidermidis (strain ATCC 35984 / DSM 28319 / BCRC 17069 / CCUG 31568 / BM 3577 / RP62A) protein is Undecaprenyl-diphosphatase.